The sequence spans 360 residues: Protein RecA (360 aa).

Residue glycine 65–threonine 72 coordinates ATP.

This sequence belongs to the RecA family.

The protein resides in the cytoplasm. In terms of biological role, can catalyze the hydrolysis of ATP in the presence of single-stranded DNA, the ATP-dependent uptake of single-stranded DNA by duplex DNA, and the ATP-dependent hybridization of homologous single-stranded DNAs. It interacts with LexA causing its activation and leading to its autocatalytic cleavage. This Tolumonas auensis (strain DSM 9187 / NBRC 110442 / TA 4) protein is Protein RecA.